The following is a 1674-amino-acid chain: MSVHTSHSRHNIGSLEVSSSQKISASSGLVHSSRLELHLKADMSECENHDPFVNAGSKTIDINSTYVISACKKTRETPVTSDPRRLSLQRRATCGDRESSLLGSELGNRRTADTSLRLQRRHGRADYVGKWETLNPVGGNPGSDSASQASRTEAKGVNNDTRVLSSVVSVKDSNDTGLTRCKDPGPPVGASNEKVTVKDTNSRAPVGSQRQTEAMRSGHLVVQLTESKSDTPVSGGRNSHRGNAGKDTAKQVGTFGSSDTRTPVKCVLEHRWTPRHDPPPPKSPALSTPKNNGKDIPKHGSTFRSASSESRTPVKCVPEHRWTPRHDLPPPKSPALSTLKNRIASPRVKPRPKSSLFANKRESSRESTLPPEENSLVQKTFTEPDSLKVENSQVTVAVRVRPFSKREKTEKASQVVFTNGEEITVEHPDMKQVYSFIYDVSFWSFDECHPGYASQTTVYETLAAPLLDRAFEGYNTCLFAYGQTGSGKSYTMMGLNEEPGIIPRFCEDLFAQIAKKQTSEVSYHLEMSFFEVYNEKIHDLLVCKGENGQRKQPLRAREHPVSGPYVEGLSMNVVSSYSDIQSWLELGNKQRATAATGMNDKSSRSHSVFTLVMTQTKTEVVEGEEHDHRITSRINLVDLAGSERCSTAHSSGQRLKEGVSINKSLLTLGKVISALSEQANGKRVFIPYRESTLTWLLKESLGGNSKTAMIATVSPAASNIEETLSTLRYATQARLIVNIAKVNEDMNAKLIRELKAEIEKLKAAQRSNRNIDPERYRLCRQEITSLRMKLHQQERDMAEIQRVWKEKFEQAEKRKLQETKELQKAGVTFQMDNHLPNLVNLNEDPQLSEMLLYMVKEGVTTVGKHTPSSSHDIQLSGVLIADDHCTIRNFGGTVSIVPAGEAKTYVNGTHISEPTVLHHGDRVVLGGDHYFRFNHPVEVQKGKKLSSRNNLTTSEGPKDFEFAKNELLTAQRSRLEAEIKDAQLKAKEEMMQGIQIAKEMAQQELSSQKAVYERKIQALEAELREESQRKRLEELNNQKASHKIEELERAKQHLEQEVYVNKRRLEMETLATKQALEDHRIRHARILEALEIEKQKIAEEVQMLQENRGNRDKTFTIQPNWNSMKLSTMIQEANAISDKFKKCYIFGRHDASDKGRSDTSVRVRNLQLGISTFWSLEKFESKLAAMKELYESNGGDRDEDVFCDPADEWEPDITSTPVSSLSRRRSRSLMKNRRVSGCLHDIHPIQSMQSSHSSGLMEKPSTIYSNSSESFLPGICKELIGSSIDFLGQSFDEEKTIADSLINNLLRLHNGVIAISKAHEEQDEESQDNLFSDRAAQALTIQVACAFEQLVVLFKHWLGDFLPCTGSARLEDELRQDIKKLGGYLQLFLQGCCSDISSMVKEAQNKVMKIIQQAVQCVGQLAVLKGSKLCVLENSSKVSSTQEFMAALQDGVTSGMKSLLDSGLETAQDLRQDLSRQSAREEVTKQMKASTVEWVGSLENAVAEWRTKSFRTQAQEGSRQQVSKLLSLASEFLKLKSCLQQTVEMIVSALRGCPSDLHCLRSCTETICSLARKLHSDFSAHSASAGSCGNELPRADCEELESLAKSLLLCFECGESPGLSKPWESCSSNSKEEQCKSDRADCGKSGPRRACEPHGDATPAVSSGDCTPNRIQWV.

Residues 1-391 (MSVHTSHSRH…TEPDSLKVEN (391 aa)) form a required for PRC1-binding region. 2 disordered regions span residues 132-158 (ETLN…KGVN) and 171-374 (KDSN…PEEN). Polar residues-rich tracts occupy residues 142–151 (GSDSASQASR) and 202–214 (SRAP…QTEA). A Phosphoserine modification is found at S257. Residue T262 is modified to Phosphothreonine. Basic and acidic residues predominate over residues 267–279 (VLEHRWTPRHDPP). Residues 302–311 (TFRSASSESR) are compositionally biased toward polar residues. The span at 317-329 (VPEHRWTPRHDLP) shows a compositional bias: basic and acidic residues. Positions 391–772 (NSQVTVAVRV…AAQRSNRNID (382 aa)) are required for microtubule-binding with high affinity. Residues 393 to 736 (QVTVAVRVRP…LRYATQARLI (344 aa)) form the Kinesin motor domain. 482–489 (GQTGSGKS) lines the ATP pocket. Positions 743–826 (NEDMNAKLIR…QETKELQKAG (84 aa)) form a coiled coil. Residues 860–911 (TTVGKHTPSSSHDIQLSGVLIADDHCTIRNFGGTVSIVPAGEAKTYVNGTHI) enclose the FHA domain. Residues 936–1674 (PVEVQKGKKL…DCTPNRIQWV (739 aa)) are required for CIT-binding. The stretch at 961–1110 (EFAKNELLTA…VQMLQENRGN (150 aa)) forms a coiled coil. Phosphoserine occurs at positions 973 and 1326. The disordered stretch occupies residues 1618–1674 (GLSKPWESCSSNSKEEQCKSDRADCGKSGPRRACEPHGDATPAVSSGDCTPNRIQWV). Over residues 1630 to 1642 (SKEEQCKSDRADC) the composition is skewed to basic and acidic residues. Residues 1660-1674 (AVSSGDCTPNRIQWV) are compositionally biased toward polar residues.

The protein belongs to the TRAFAC class myosin-kinesin ATPase superfamily. Kinesin family. Directly interacts with PRC1 within a complex also containing KIF4A, KIF20A and KIF23; targets to the central spindle. Directly interacts with CIT depending on the activation state of the kinase (stronger interaction with the kinase-dead form); targets to the midbody. Interacts with ARRB2; the interaction is detected in the nucleus upon OR1D2 stimulation. Interacts with AKT1; the interaction is detected in the plasma membrane upon INS stimulation and promotes AKT1 phosphorylation. Interacts with SVIL; at midbody during cytokinesis. Interacts with RADIL (via PDZ domain); recruits RADIL to the microtubule network restricting RADIL from interaction with activated RAP1A.

It localises to the nucleus. Its subcellular location is the cytoplasm. The protein localises to the cytoskeleton. It is found in the spindle. The protein resides in the midbody. Functionally, microtubule motor protein that binds to microtubules with high affinity through each tubulin heterodimer and has an ATPase activity. Plays a role in many processes like cell division, cytokinesis and also in cell proliferation and apoptosis. During cytokinesis, targets to central spindle and midbody through its interaction with PRC1 and CIT respectively. Regulates cell growth through regulation of cell cycle progression and cytokinesis. During cell cycle progression acts through SCF-dependent proteasomal ubiquitin-dependent protein catabolic process which controls CDKN1B degradation, resulting in positive regulation of cyclins, including CCNE1, CCND1 and CCNB1. During late neurogenesis, regulates the cerebellar and cerebral cortex development and olfactory bulb development through regulation of apoptosis, cell proliferation and cell division. Also is required for chromosome congression and alignment during mitotic cell cycle process. Regulates cell spreading, focal adhesion dynamics, and cell migration through its interaction with RADIL resulting in regulation of RAP1A-mediated inside-out integrin activation by tethering RADIL on microtubules. This is Kinesin-like protein KIF14 from Mus musculus (Mouse).